We begin with the raw amino-acid sequence, 448 residues long: MTSPIVTLKSVEQQQDLIITPPTTGLSLTGKITIPGDKSISHRALMLGAIAQGETIIKGLLLGEDPHSTAKCFRAMGAEISPLNTDKIIVKGIGLGNLQEPVDVLDAGNSGTTMRLMLGLLASHPERFFTVTGDSSLRSRPMSRVIKPLQQMGAQIWGRKQNSLAPLAISGQSLQPIHYHSPIASAQVKSCILLAGLSVEGKTTVTEPALSRDHSERMLKAFGANLEIDPQTHSVTVMGPSRLTGQTVIVPGDISSAAFWLVAGSIVPGSDLLIENVGINPTRTGILEVLEMMGADLTLLNQREITGEPVADIRVKHSQLKACTISGDIVPRLIDEIPILAVAAVFAQGTTVIRDAQELRVKESDRLAVMACELNQMGAKITELPDGLEITGPVSLKGSQVDSYTDHRIAMSLAIAALNASHSTTIHRAQAAAVSYPEFITTLQQLCQ.

Residues K38, S39, and R43 each contribute to the 3-phosphoshikimate site. K38 is a binding site for phosphoenolpyruvate. The phosphoenolpyruvate site is built by G111 and R140. Positions 185, 187, 335, and 362 each coordinate 3-phosphoshikimate. Q187 lines the phosphoenolpyruvate pocket. The active-site Proton acceptor is D335. 2 residues coordinate phosphoenolpyruvate: R366 and R408.

It belongs to the EPSP synthase family. Monomer.

The protein localises to the cytoplasm. The enzyme catalyses 3-phosphoshikimate + phosphoenolpyruvate = 5-O-(1-carboxyvinyl)-3-phosphoshikimate + phosphate. It participates in metabolic intermediate biosynthesis; chorismate biosynthesis; chorismate from D-erythrose 4-phosphate and phosphoenolpyruvate: step 6/7. Functionally, catalyzes the transfer of the enolpyruvyl moiety of phosphoenolpyruvate (PEP) to the 5-hydroxyl of shikimate-3-phosphate (S3P) to produce enolpyruvyl shikimate-3-phosphate and inorganic phosphate. The chain is 3-phosphoshikimate 1-carboxyvinyltransferase from Gloeothece citriformis (strain PCC 7424) (Cyanothece sp. (strain PCC 7424)).